We begin with the raw amino-acid sequence, 273 residues long: Ribosomal RNA small subunit methyltransferase A (273 aa).

Positions 18, 20, 45, 66, 91, and 113 each coordinate S-adenosyl-L-methionine.

This sequence belongs to the class I-like SAM-binding methyltransferase superfamily. rRNA adenine N(6)-methyltransferase family. RsmA subfamily.

The protein resides in the cytoplasm. The enzyme catalyses adenosine(1518)/adenosine(1519) in 16S rRNA + 4 S-adenosyl-L-methionine = N(6)-dimethyladenosine(1518)/N(6)-dimethyladenosine(1519) in 16S rRNA + 4 S-adenosyl-L-homocysteine + 4 H(+). Its function is as follows. Specifically dimethylates two adjacent adenosines (A1518 and A1519) in the loop of a conserved hairpin near the 3'-end of 16S rRNA in the 30S particle. May play a critical role in biogenesis of 30S subunits. The sequence is that of Ribosomal RNA small subunit methyltransferase A from Erwinia tasmaniensis (strain DSM 17950 / CFBP 7177 / CIP 109463 / NCPPB 4357 / Et1/99).